The chain runs to 247 residues: MLLLPLPLLLLFLCSRAEAGEIIGGTECKPHSRPYMAYLEIVTSNGPSKSCGGFLIRRNFVLTAAHCAGRSITVTLGAHNITEKEDTWQELEVIKQFRHPKYNTSTLHHDIMLLKLKEKASLTLAVGTLPFPSQFNFVPPGRMCRVAGWGRTGVLKPGSDTLQEVKLRLMDPQACSHFRYFDHNLQLCVGNPRKTKSAFKGDSGGPLLCAGVAQGIVSYGRLDAKPPAVFTRISHYRPWINKILQAN.

The signal sequence occupies residues 1-19 (MLLLPLPLLLLFLCSRAEA). Residues 20–21 (GE) constitute a propeptide, activation peptide. The 224-residue stretch at 22-245 (IIGGTECKPH…YRPWINKILQ (224 aa)) folds into the Peptidase S1 domain. The cysteines at positions 51 and 67 are disulfide-linked. The Charge relay system role is filled by histidine 66. Asparagine 80 and asparagine 103 each carry an N-linked (GlcNAc...) asparagine glycan. Residue aspartate 110 is the Charge relay system of the active site. Disulfide bonds link cysteine 144-cysteine 209 and cysteine 175-cysteine 188. Serine 203 acts as the Charge relay system in catalysis.

It belongs to the peptidase S1 family. Granzyme subfamily.

It is found in the secreted. It localises to the cytoplasmic granule. It catalyses the reaction Preferential cleavage: Phe-|-Xaa &gt; Tyr-|-Xaa &gt; Trp-|-Xaa &gt; Leu-|-Xaa.. Functionally, major secreted protease of mast cells with suspected roles in vasoactive peptide generation, extracellular matrix degradation, and regulation of gland secretion. In Papio hamadryas (Hamadryas baboon), this protein is Chymase (CMA1).